The chain runs to 240 residues: UDP-2,3-diacylglucosamine hydrolase (240 aa).

Residues Asp-9, His-11, Asp-43, Asn-81, and His-116 each coordinate Mn(2+). 81-82 (NR) lines the substrate pocket. Residues Asp-124, Ser-162, Lys-166, Lys-169, and His-197 each coordinate substrate. Mn(2+) is bound by residues His-197 and His-199.

This sequence belongs to the LpxH family. Requires Mn(2+) as cofactor.

The protein resides in the cell inner membrane. The enzyme catalyses UDP-2-N,3-O-bis[(3R)-3-hydroxytetradecanoyl]-alpha-D-glucosamine + H2O = 2-N,3-O-bis[(3R)-3-hydroxytetradecanoyl]-alpha-D-glucosaminyl 1-phosphate + UMP + 2 H(+). Its pathway is glycolipid biosynthesis; lipid IV(A) biosynthesis; lipid IV(A) from (3R)-3-hydroxytetradecanoyl-[acyl-carrier-protein] and UDP-N-acetyl-alpha-D-glucosamine: step 4/6. Its function is as follows. Hydrolyzes the pyrophosphate bond of UDP-2,3-diacylglucosamine to yield 2,3-diacylglucosamine 1-phosphate (lipid X) and UMP by catalyzing the attack of water at the alpha-P atom. Involved in the biosynthesis of lipid A, a phosphorylated glycolipid that anchors the lipopolysaccharide to the outer membrane of the cell. The sequence is that of UDP-2,3-diacylglucosamine hydrolase from Neisseria meningitidis serogroup C (strain 053442).